We begin with the raw amino-acid sequence, 96 residues long: RNA-binding protein Hfq (96 aa).

A Sm domain is found at 9–68 (DPYLNALRRERIPVSIYLVNGIKLQGQIESFDQFVILLKNTVNQMVYKHAISTVVPARSV). The tract at residues 65–96 (ARSVSHHNNPQQQQQHSQQTESAAPAAEPQAE) is disordered. Low complexity predominate over residues 70–96 (HHNNPQQQQQHSQQTESAAPAAEPQAE).

This sequence belongs to the Hfq family. Homohexamer.

RNA chaperone that binds small regulatory RNA (sRNAs) and mRNAs to facilitate mRNA translational regulation in response to envelope stress, environmental stress and changes in metabolite concentrations. Also binds with high specificity to tRNAs. In Mannheimia succiniciproducens (strain KCTC 0769BP / MBEL55E), this protein is RNA-binding protein Hfq.